A 332-amino-acid chain; its full sequence is Holliday junction branch migration complex subunit RuvB (332 aa).

Residues 1 to 182 (MNKNFIESNL…FAFTCRLEYY (182 aa)) form a large ATPase domain (RuvB-L) region. Residues leucine 21, arginine 22, glycine 63, lysine 66, threonine 67, threonine 68, 129 to 131 (EDF), arginine 172, tyrosine 182, and arginine 219 contribute to the ATP site. Threonine 67 serves as a coordination point for Mg(2+). Residues 183-253 (DPMILQKILL…VANRALTMLS (71 aa)) form a small ATPAse domain (RuvB-S) region. The interval 256–332 (EKGLDEMDKK…YQHIVGSSQR (77 aa)) is head domain (RuvB-H). DNA is bound by residues arginine 311 and arginine 316.

This sequence belongs to the RuvB family. Homohexamer. Forms an RuvA(8)-RuvB(12)-Holliday junction (HJ) complex. HJ DNA is sandwiched between 2 RuvA tetramers; dsDNA enters through RuvA and exits via RuvB. An RuvB hexamer assembles on each DNA strand where it exits the tetramer. Each RuvB hexamer is contacted by two RuvA subunits (via domain III) on 2 adjacent RuvB subunits; this complex drives branch migration. In the full resolvosome a probable DNA-RuvA(4)-RuvB(12)-RuvC(2) complex forms which resolves the HJ.

The protein localises to the cytoplasm. The enzyme catalyses ATP + H2O = ADP + phosphate + H(+). The RuvA-RuvB-RuvC complex processes Holliday junction (HJ) DNA during genetic recombination and DNA repair, while the RuvA-RuvB complex plays an important role in the rescue of blocked DNA replication forks via replication fork reversal (RFR). RuvA specifically binds to HJ cruciform DNA, conferring on it an open structure. The RuvB hexamer acts as an ATP-dependent pump, pulling dsDNA into and through the RuvAB complex. RuvB forms 2 homohexamers on either side of HJ DNA bound by 1 or 2 RuvA tetramers; 4 subunits per hexamer contact DNA at a time. Coordinated motions by a converter formed by DNA-disengaged RuvB subunits stimulates ATP hydrolysis and nucleotide exchange. Immobilization of the converter enables RuvB to convert the ATP-contained energy into a lever motion, pulling 2 nucleotides of DNA out of the RuvA tetramer per ATP hydrolyzed, thus driving DNA branch migration. The RuvB motors rotate together with the DNA substrate, which together with the progressing nucleotide cycle form the mechanistic basis for DNA recombination by continuous HJ branch migration. Branch migration allows RuvC to scan DNA until it finds its consensus sequence, where it cleaves and resolves cruciform DNA. In Protochlamydia amoebophila (strain UWE25), this protein is Holliday junction branch migration complex subunit RuvB.